The sequence spans 67 residues: Surface composition regulator (67 aa).

This sequence belongs to the GlgS family.

Major determinant of cell surface composition. Negatively regulates motility, adhesion and synthesis of biofilm exopolysaccharides. The protein is Surface composition regulator of Salmonella paratyphi A (strain ATCC 9150 / SARB42).